A 206-amino-acid chain; its full sequence is ATP phosphoribosyltransferase (206 aa).

Belongs to the ATP phosphoribosyltransferase family. Short subfamily. In terms of assembly, heteromultimer composed of HisG and HisZ subunits.

Its subcellular location is the cytoplasm. It carries out the reaction 1-(5-phospho-beta-D-ribosyl)-ATP + diphosphate = 5-phospho-alpha-D-ribose 1-diphosphate + ATP. The protein operates within amino-acid biosynthesis; L-histidine biosynthesis; L-histidine from 5-phospho-alpha-D-ribose 1-diphosphate: step 1/9. In terms of biological role, catalyzes the condensation of ATP and 5-phosphoribose 1-diphosphate to form N'-(5'-phosphoribosyl)-ATP (PR-ATP). Has a crucial role in the pathway because the rate of histidine biosynthesis seems to be controlled primarily by regulation of HisG enzymatic activity. This chain is ATP phosphoribosyltransferase, found in Geobacillus sp. (strain WCH70).